A 278-amino-acid polypeptide reads, in one-letter code: Gap junction delta-3 protein (278 aa).

Over 1 to 24 (MGEWAFLGSLLDAVQLQSPLVGRL) the chain is Cytoplasmic. A helical transmembrane segment spans residues 25–45 (WLVIMLIFRILVLATVGGAVF). Over 46–76 (EDEQEEFVCNTLQPGCRQTCYDRAFPVSHYR) the chain is Extracellular. The chain crosses the membrane as a helical span at residues 77 to 97 (FWLFHILLLSAPPVLFVIYSM). The Cytoplasmic segment spans residues 98-136 (HQASKEAGGAQLAPPCARGRAEAPCSPCALRARRARRCY). Residues 137–157 (LLSVALRLLAELAFLGGQALL) traverse the membrane as a helical segment. Topologically, residues 158–188 (YGFRVDPHYACAGPPCPHTVDCFVSRPTEKT) are extracellular. A helical membrane pass occupies residues 189–209 (VFVVFYFAVGLLSALLSVAEL). At 210 to 278 (GHLLWKGRQR…LATVRQDLAI (69 aa)) the chain is on the cytoplasmic side. The segment at 223-278 (LPPPPPSPSLPSQRGDPDPFGPPAYAHRSPAGDSEGEGGSGHSKASLATVRQDLAI) is disordered.

The protein belongs to the connexin family. Delta-type subfamily. A connexon is composed of a hexamer of connexins.

The protein localises to the cell membrane. It localises to the cell junction. It is found in the gap junction. One gap junction consists of a cluster of closely packed pairs of transmembrane channels, the connexons, through which materials of low MW diffuse from one cell to a neighboring cell. The protein is Gap junction delta-3 protein (Gjd3) of Mus musculus (Mouse).